We begin with the raw amino-acid sequence, 233 residues long: Serine-rich 25 kDa antigen protein (233 aa).

A disordered region spans residues 35 to 219; it reads KNEASPEKLE…DNNNLDAASS (185 aa). Over residues 38 to 53 the composition is skewed to basic and acidic residues; that stretch reads ASPEKLEEAEEKEKSS. Over residues 61 to 71 the composition is skewed to acidic residues; sequence SNEDNEDDEDE. Repeat copies occupy residues 82-93, 102-113, 114-125, 126-137, 138-149, 150-161, 162-169, 170-177, 178-185, and 186-193. The segment at 82–161 is 6 X 12 AA tandem repeats of S-S-S-D-K-P-D-N-K-P-E-A; sequence SSSDKPDNKP…SDKPDNKPEA (80 aa). A compositionally biased stretch (basic and acidic residues) spans 83 to 159; the sequence is SSDKPDNKPE…SSSDKPDNKP (77 aa). Positions 160 to 192 are enriched in polar residues; that stretch reads EASSTNKPEASSTNKPEASSTNKPEASSTNKPE. The interval 162–193 is 4 X 8 AA tandem repeats of S-S-T-N-K-P-E-A; it reads SSTNKPEASSTNKPEASSTNKPEASSTNKPEA. Residues 193-219 show a composition bias toward low complexity; the sequence is ASSTSNSNDKSGSSSDNDNNNLDAASS.

Post-translationally, phosphorylated on serine residue(s). In terms of processing, O-glycosylated; glycans consist of single N-acetylglucosamine residues. O-acylated; acyl group is probably palmitate, not myristate.

It is found in the cell membrane. Functionally, plays a role in the adhesion to host cells. Involved in the adhesion to host apoptotic cells thereby facilitating their phagocytosis. The protein is Serine-rich 25 kDa antigen protein of Entamoeba histolytica (strain ATCC 30459 / HM-1:IMSS / ABRM).